A 192-amino-acid polypeptide reads, in one-letter code: Probable molybdenum cofactor guanylyltransferase (192 aa).

GTP is bound by residues 8–10 (LAG), K20, D69, and D94. D94 contributes to the Mg(2+) binding site.

It belongs to the MobA family. Requires Mg(2+) as cofactor.

It localises to the cytoplasm. It catalyses the reaction Mo-molybdopterin + GTP + H(+) = Mo-molybdopterin guanine dinucleotide + diphosphate. Its function is as follows. Transfers a GMP moiety from GTP to Mo-molybdopterin (Mo-MPT) cofactor (Moco or molybdenum cofactor) to form Mo-molybdopterin guanine dinucleotide (Mo-MGD) cofactor. The sequence is that of Probable molybdenum cofactor guanylyltransferase from Pyrococcus horikoshii (strain ATCC 700860 / DSM 12428 / JCM 9974 / NBRC 100139 / OT-3).